Consider the following 217-residue polypeptide: tRNA (guanine-N(7)-)-methyltransferase (217 aa).

E44, E69, D96, and D118 together coordinate S-adenosyl-L-methionine. D118 is a catalytic residue. K122 lines the substrate pocket. The interaction with RNA stretch occupies residues 124–129 (RHEKRR). Residues D154 and 191–194 (TEYE) contribute to the substrate site.

This sequence belongs to the class I-like SAM-binding methyltransferase superfamily. TrmB family.

It catalyses the reaction guanosine(46) in tRNA + S-adenosyl-L-methionine = N(7)-methylguanosine(46) in tRNA + S-adenosyl-L-homocysteine. It participates in tRNA modification; N(7)-methylguanine-tRNA biosynthesis. Functionally, catalyzes the formation of N(7)-methylguanine at position 46 (m7G46) in tRNA. This Bacillus velezensis (strain DSM 23117 / BGSC 10A6 / LMG 26770 / FZB42) (Bacillus amyloliquefaciens subsp. plantarum) protein is tRNA (guanine-N(7)-)-methyltransferase.